A 213-amino-acid chain; its full sequence is Uridine kinase (213 aa).

Glycine 15–serine 22 lines the ATP pocket.

This sequence belongs to the uridine kinase family.

It is found in the cytoplasm. The catalysed reaction is uridine + ATP = UMP + ADP + H(+). It catalyses the reaction cytidine + ATP = CMP + ADP + H(+). The protein operates within pyrimidine metabolism; CTP biosynthesis via salvage pathway; CTP from cytidine: step 1/3. Its pathway is pyrimidine metabolism; UMP biosynthesis via salvage pathway; UMP from uridine: step 1/1. The chain is Uridine kinase from Cronobacter sakazakii (strain ATCC BAA-894) (Enterobacter sakazakii).